Consider the following 7311-residue polypeptide: MAM and LDL-receptor class A domain-containing protein 2 (7311 aa).

MAM domains lie at 4 to 171, 199 to 361, 363 to 530, 532 to 695, 727 to 887, 889 to 1050, 1052 to 1220, 1228 to 1392, 1394 to 1557, 1559 to 1722, 1755 to 1918, 1920 to 2087, 2089 to 2254, 2274 to 2437, 2439 to 2601, and 2603 to 2771; these read AYCD…SCVT, LDCD…FCSP, KQCT…VCPP, GDCN…NCPV, YDCT…QCPV, MQCS…ACPL, GDCT…RCRL, FDCN…SCPS, GMCS…SCPA, GDCS…NCIQ, NDCN…KCPS, TDCT…PCPL, GDCD…RCSV, NNCT…PCPP, TVCD…PCPP, and GSCD…YCVG. The disordered stretch occupies residues 2461 to 2481; that stretch reads WKRDSGGTPSAGTGPSRDHTT. The segment covering 2466–2475 has biased composition (low complexity); the sequence is GGTPSAGTGP. P-type domains lie at 2771-2817 and 2818-2862; these read GLCS…FYHP and SACA…FHGP. 6 disulfide bridges follow: Cys2773/Cys2802, Cys2784/Cys2801, Cys2795/Cys2813, Cys2820/Cys2847, Cys2831/Cys2846, and Cys2841/Cys2858. 4 MAM domains span residues 2883–3048, 3050–3214, 3216–3384, and 3429–3587; these read WDCT…TCPP, RECD…PCPP, GSCD…FCPS, and GACT…NCTL. The LDL-receptor class A 1 domain maps to 3593–3628; it reads SCGQQHRCIRGSCIDRGRVCDYTDDCGDNSDEQNCY. Disulfide bonds link Cys3594-Cys3605, Cys3600-Cys3618, and Cys3612-Cys3627. The region spanning 3632 to 3794 is the MAM 21 domain; the sequence is YRCSFEKSLC…DLSMTSSCQS (163 aa). 2 consecutive LDL-receptor class A domains span residues 3814–3850 and 4016–4054; these read PCPRFQFKCSNGLCIDTWNVCNYRDDCGDGSDEVNCG and SCISGEYRCTRGSCVLPSQLCDFSDDCGDMSDENPSTCA. Cystine bridges form between Cys3815–Cys3827, Cys3822–Cys3840, and Cys3834–Cys3849. The 162-residue stretch at 3850–4011 folds into the MAM 22 domain; it reads GSCSFEPGLC…DDVTFQGCAL (162 aa). Disulfide bonds link Cys4017/Cys4029, Cys4024/Cys4042, and Cys4036/Cys4053. The MAM 23 domain maps to 4058-4221; the sequence is ERCNFEQDLC…DVSFTPNCRP (164 aa). One can recognise an LDL-receptor class A 4 domain in the interval 4239–4276; sequence GCQPGKFKCANGGNCISVSKVCNFYSDCSGGSDEMNCP. Intrachain disulfides connect Cys4240–Cys4253, Cys4247–Cys4266, and Cys4260–Cys4275. Positions 4277 to 4438 constitute an MAM 24 domain; it reads ATCNFQNSFC…DDVSFEHCAE (162 aa). An LDL-receptor class A 5 domain is found at 4444–4483; that stretch reads TCSGLSVFRCQSGHCIAMSGKCDFEPDCCDGSEETNIVCA. 3 cysteine pairs are disulfide-bonded: Cys4445-Cys4458, Cys4453-Cys4471, and Cys4465-Cys4482. The 161-residue stretch at 4486–4646 folds into the MAM 25 domain; it reads NRCNFEAGLC…DISFTPDCVV (161 aa). LDL-receptor class A domains lie at 4660-4699 and 4859-4899; these read PTQPSCFNCRDGSACVNISKTCDFHNDCTDKSDEDADLCG and YCSG…QSCS. 5 disulfide bridges follow: Cys4668–Cys4687, Cys4681–Cys4698, Cys4860–Cys4876, Cys4871–Cys4889, and Cys4883–Cys4898. One can recognise an MAM 26 domain in the interval 4700–4862; the sequence is WPCDFQRGTC…NNYTLTYCSG (163 aa). The 161-residue stretch at 4903–5063 folds into the MAM 27 domain; the sequence is SRCTFENGLC…SIAMKPSCQQ (161 aa). The region spanning 5085–5122 is the LDL-receptor class A 8 domain; it reads NCVLPQVPCVSDGKCVSPSQVCDFNLDCADASDERSCP. Intrachain disulfides connect Cys5086–Cys5099, Cys5093–Cys5112, and Cys5106–Cys5121. Residues 5123-5281 form the MAM 28 domain; that stretch reads HMCTFESDQC…DDIKFVDCAL (159 aa). The region spanning 5287 to 5322 is the LDL-receptor class A 9 domain; sequence SCPSQFTCARNSCVSNDYVCDFNDDCGDGSDETLCG. Disulfide bonds link Cys5288–Cys5299, Cys5294–Cys5312, and Cys5306–Cys5321. An MAM 29 domain is found at 5326 to 5489; sequence TRCDFSRGSC…DVSFTTGCKQ (164 aa). The LDL-receptor class A 10 domain occupies 5513-5552; it reads QCTTAEFNCFNQGSGACIPSTQVCNFQPNCNDGVDEQNCA. Intrachain disulfides connect Cys5514–Cys5529, Cys5521–Cys5542, and Cys5536–Cys5551. The MAM 30 domain occupies 5554–5719; sequence TKCSFDGGDF…DDIEFLNCVP (166 aa). The LDL-receptor class A 11 domain occupies 5725 to 5763; it reads KCTADEFQCARGGCIPKTSVCDFKADCMVGDVSDESSCS. 3 disulfides stabilise this stretch: Cys5726–Cys5738, Cys5733–Cys5751, and Cys5745–Cys5762. The 168-residue stretch at 5768–5935 folds into the MAM 31 domain; sequence GQCDFEHGLC…LTPGCQICTD (168 aa). Residues 5957–5993 enclose the LDL-receptor class A 12 domain; that stretch reads PCSLQQYVCKNLRCVDKAQICNFKDDCGDNSDELPCG. 3 disulfide bridges follow: Cys5958/Cys5970, Cys5965/Cys5983, and Cys5977/Cys5992. The MAM 32 domain occupies 5994-6156; sequence SNCTFEGDCY…DISFTDNCFV (163 aa). Positions 6014–6034 are disordered; it reads NFHWRRRNGKTPSVGTGPTND. The span at 6023-6034 shows a compositional bias: polar residues; the sequence is KTPSVGTGPTND. One can recognise an LDL-receptor class A 13 domain in the interval 6161–6200; the sequence is TCTPNEVKCRTSGHCVAEQRVCDHVKDCNDGTDEDALICS. 3 disulfide bridges follow: Cys6162-Cys6175, Cys6169-Cys6188, and Cys6182-Cys6199. The MAM 33 domain occupies 6204–6365; it reads ASCDFDVNWC…DISFSAGCYK (162 aa). The 38-residue stretch at 6377-6414 folds into the LDL-receptor class A 14 domain; the sequence is RCSKVQFYCKADDLCINIHWKCDGEKDCTDGADEMLCP. 3 disulfide bridges follow: Cys6378-Cys6391, Cys6385-Cys6404, and Cys6398-Cys6413. 4 consecutive MAM domains span residues 6430 to 6590, 6606 to 6779, 6808 to 6965, and 7173 to 7311; these read ANCN…NCAK, LDED…NCDF, GDCT…QCQF, and GSCN…YNNL.

As to expression, component of the acid-insoluble and acid-soluble organic matrix of the aragonitic skeleton (at protein level).

Its subcellular location is the secreted. The sequence is that of MAM and LDL-receptor class A domain-containing protein 2 from Acropora millepora (Staghorn coral).